Consider the following 429-residue polypeptide: Enolase (429 aa).

Gln-162 contributes to the (2R)-2-phosphoglycerate binding site. Glu-204 functions as the Proton donor in the catalytic mechanism. Mg(2+)-binding residues include Asp-241, Glu-288, and Asp-315. Residues Lys-340, Arg-369, Ser-370, and Lys-391 each contribute to the (2R)-2-phosphoglycerate site. The active-site Proton acceptor is Lys-340.

The protein belongs to the enolase family. Mg(2+) serves as cofactor.

The protein resides in the cytoplasm. It is found in the secreted. Its subcellular location is the cell surface. The catalysed reaction is (2R)-2-phosphoglycerate = phosphoenolpyruvate + H2O. It functions in the pathway carbohydrate degradation; glycolysis; pyruvate from D-glyceraldehyde 3-phosphate: step 4/5. Its function is as follows. Catalyzes the reversible conversion of 2-phosphoglycerate (2-PG) into phosphoenolpyruvate (PEP). It is essential for the degradation of carbohydrates via glycolysis. The protein is Enolase of Christiangramia forsetii (strain DSM 17595 / CGMCC 1.15422 / KT0803) (Gramella forsetii).